We begin with the raw amino-acid sequence, 33 residues long: Pardaxin P-4 (33 aa).

The protein belongs to the pardaxin family. Monomer. In aqueous solution exists as a tetramer.

The protein localises to the secreted. It is found in the target cell membrane. Exhibits unusual shark repellent and surfactant properties. Forms voltage-dependent, ion-permeable channels in membranes. At high concentration causes cell membrane lysis. This Pardachirus marmoratus (Finless sole) protein is Pardaxin P-4.